The sequence spans 330 residues: Ketol-acid reductoisomerase (NADP(+)) (330 aa).

Positions 1 to 182 (MAVVYYDQDA…GATRAGVIET (182 aa)) constitute a KARI N-terminal Rossmann domain. Residues 25-28 (YGSQ), Arg-48, Ser-51, Ser-53, and 83-86 (DETQ) each bind NADP(+). Residue His-108 is part of the active site. Residue Gly-134 coordinates NADP(+). One can recognise a KARI C-terminal knotted domain in the interval 183-328 (TFKEETETDL…DQLREMMSWL (146 aa)). Positions 191, 195, 227, and 231 each coordinate Mg(2+). Ser-252 contributes to the substrate binding site.

It belongs to the ketol-acid reductoisomerase family. Mg(2+) serves as cofactor.

The enzyme catalyses (2R)-2,3-dihydroxy-3-methylbutanoate + NADP(+) = (2S)-2-acetolactate + NADPH + H(+). The catalysed reaction is (2R,3R)-2,3-dihydroxy-3-methylpentanoate + NADP(+) = (S)-2-ethyl-2-hydroxy-3-oxobutanoate + NADPH + H(+). It functions in the pathway amino-acid biosynthesis; L-isoleucine biosynthesis; L-isoleucine from 2-oxobutanoate: step 2/4. Its pathway is amino-acid biosynthesis; L-valine biosynthesis; L-valine from pyruvate: step 2/4. Involved in the biosynthesis of branched-chain amino acids (BCAA). Catalyzes an alkyl-migration followed by a ketol-acid reduction of (S)-2-acetolactate (S2AL) to yield (R)-2,3-dihydroxy-isovalerate. In the isomerase reaction, S2AL is rearranged via a Mg-dependent methyl migration to produce 3-hydroxy-3-methyl-2-ketobutyrate (HMKB). In the reductase reaction, this 2-ketoacid undergoes a metal-dependent reduction by NADPH to yield (R)-2,3-dihydroxy-isovalerate. This Moorella thermoacetica (strain ATCC 39073 / JCM 9320) protein is Ketol-acid reductoisomerase (NADP(+)).